A 227-amino-acid polypeptide reads, in one-letter code: Protein lin-28 (227 aa).

The span at 1-17 (MSTVVSEGRNDGNNRYS) shows a compositional bias: polar residues. Residues 1–27 (MSTVVSEGRNDGNNRYSPQDEVEDRLP) form a disordered region. Residues 52–120 (RYFGSCKWFN…GREAYAVSGE (69 aa)) enclose the CSD domain. 2 consecutive CCHC-type zinc fingers follow at residues 143–160 (RCFR…SCPN) and 166–183 (KVCY…ICPE). Zn(2+) is bound by residues Cys-144, Cys-147, His-153, Cys-158, Cys-168, Cys-171, His-176, and Cys-181. Residues 181 to 227 (CPERRRKHRPEQVAAEEAEAARMAAEKSSPTTSDDDIREKNSNSSDE) are disordered.

This sequence belongs to the lin-28 family. Component of a complex at least containing lep-2, lin-28 and the long non-coding RNA lep-5, which mediates the degradation of lin-28. Post-translationally, cleavage by caspase ced-3 during larval development probably induces lin-28 degradation.

Its subcellular location is the cytoplasm. Functionally, heterochronic protein which controls the choice of stage specific cell fates. Regulates the timing of the second larval stage events (L2 events) in the hypodermis. May negatively regulate the larval to adult transition via the suppression of the microRNA (miRNA) let-7 during L3. Through this regulatory role, controls the timing of the sexual maturation of the nervous system. Also has a role in the fox-1-sex-1-mediated determination of sexual fate. Plays a role in governing the developmental timing of male tail tip morphogenesis. Plays a role in controlling the seam cell number during larval stages. Plays a role in vulval development. This chain is Protein lin-28, found in Caenorhabditis elegans.